The primary structure comprises 100 residues: Acylphosphatase (100 aa).

One can recognise an Acylphosphatase-like domain in the interval Arg14–Ser100. Active-site residues include Arg29 and Asn47.

The protein belongs to the acylphosphatase family.

It catalyses the reaction an acyl phosphate + H2O = a carboxylate + phosphate + H(+). The protein is Acylphosphatase (acyP) of Synechococcus sp. (strain WH7803).